A 126-amino-acid polypeptide reads, in one-letter code: Profilin (126 aa).

Belongs to the profilin family. Occurs in many kinds of cells as a complex with monomeric actin in a 1:1 ratio.

The protein localises to the cytoplasm. Its subcellular location is the cytoskeleton. In terms of biological role, binds to actin and affects the structure of the cytoskeleton. At high concentrations, profilin prevents the polymerization of actin, whereas it enhances it at low concentrations. By binding to PIP2, it inhibits the formation of IP3 and DG. The polypeptide is Profilin (PFY1) (Saccharomyces cerevisiae (strain ATCC 204508 / S288c) (Baker's yeast)).